Here is a 603-residue protein sequence, read N- to C-terminus: Sesquiterpene synthase Cad (603 aa).

Polar residues predominate over residues 1 to 13 (MAEVGLSQNSYAS). The segment at 1-23 (MAEVGLSQNSYASANHDKKSEQQ) is disordered. 4 residues coordinate Mg(2+): aspartate 357, aspartate 361, aspartate 498, and glutamate 506. Positions 357–361 (DDIFD) match the DDXXD motif motif.

It belongs to the terpene synthase family. Tpsa subfamily. Mg(2+) is required as a cofactor. It depends on Mn(2+) as a cofactor. As to expression, mostly expressed in leaves and, to a lower extent, in stems and xylem.

The catalysed reaction is (2E,6E)-farnesyl diphosphate = beta-cadinene + diphosphate. Its pathway is secondary metabolite biosynthesis; terpenoid biosynthesis. In terms of biological role, sesquiterpene synthase involved in the biosynthesis of volatile compounds. Mediates the conversion of (2E,6E)-farnesyl diphosphate (FPP) into beta-cadinene. Not active with geranyl diphosphate (GPP) and geranylgeranyl diphosphate (GGPP) as substrates. This Chamaecyparis formosensis (Formosan cypress) protein is Sesquiterpene synthase Cad.